We begin with the raw amino-acid sequence, 25 residues long: Panurgine R (25 aa).

Disulfide bonds link cysteine 8–cysteine 23 and cysteine 11–cysteine 19.

Its subcellular location is the target cell membrane. It is found in the secreted. Its function is as follows. Antimicrobial peptide active against Gram-positive bacteria M.luteus (MIC=0.8 uM) and B.subtilis (MIC=1.5 uM). Less active against Gram-negative bacteria E.coli (MIC=32.5 uM) and yeast C.albicans (MIC=18.7 uM). Not active against S.aureus and P.aeruginosa. Has no hemolytic activity against human erythrocytes. Probably acts by disrupting membranes of target cells. The chain is Panurgine R from Panurgus calcaratus (Solitary bee).